We begin with the raw amino-acid sequence, 486 residues long: Stretch-activated cation channel yam8 (486 aa).

The N-terminal stretch at 1-24 (MFFFSTHLILKILFFWSITRNIFG) is a signal peptide. The Extracellular segment spans residues 25–464 (ATYTSLLLNN…PGVEFYESGS (440 aa)). Residues N33, N49, N59, N82, and N93 are each glycosylated (N-linked (GlcNAc...) asparagine). Residues 465–485 (ALLNISWRTFFISLIFWILFV) traverse the membrane as a helical segment. Position 486 (E486) is a topological domain, cytoplasmic.

It localises to the cell membrane. Calcium-permeable, cation-selective stretch-activated channel (SAC) that functions together with CCH1 to mediate calcium entry into cells. Required during mating. The polypeptide is Stretch-activated cation channel yam8 (Schizosaccharomyces pombe (strain 972 / ATCC 24843) (Fission yeast)).